Here is a 625-residue protein sequence, read N- to C-terminus: DNA-directed RNA polymerase subunit gamma (625 aa).

Residues Cys-71, Cys-73, Cys-86, and Cys-89 each coordinate Zn(2+). Residues Asp-467, Asp-469, and Asp-471 each contribute to the Mg(2+) site.

This sequence belongs to the RNA polymerase beta' chain family. RpoC1 subfamily. In cyanobacteria the RNAP catalytic core is composed of 2 alpha, 1 beta, 1 beta', 1 gamma and 1 omega subunit. When a sigma factor is associated with the core the holoenzyme is formed, which can initiate transcription. Mg(2+) serves as cofactor. It depends on Zn(2+) as a cofactor.

It carries out the reaction RNA(n) + a ribonucleoside 5'-triphosphate = RNA(n+1) + diphosphate. Functionally, DNA-dependent RNA polymerase catalyzes the transcription of DNA into RNA using the four ribonucleoside triphosphates as substrates. In Nostoc punctiforme (strain ATCC 29133 / PCC 73102), this protein is DNA-directed RNA polymerase subunit gamma.